Reading from the N-terminus, the 1120-residue chain is Prophage side tail fiber protein homolog StfR (1120 aa).

Disordered regions lie at residues 129–154 (KSAS…SARA), 221–442 (SAST…ATRA), and 960–1021 (SGRA…AGAH). 3 stretches are compositionally biased toward low complexity: residues 221-239 (SAST…ARDA), 248-395 (SSET…SASA), and 402-442 (RQAS…ATRA). The segment covering 985 to 1021 (DLGTKTTSSFDYGTKSTNNTGAHTHSVSGSTNSAGAH) has biased composition (polar residues).

This sequence belongs to the tail fiber family.

In Escherichia coli (strain K12), this protein is Prophage side tail fiber protein homolog StfR (stfR).